Reading from the N-terminus, the 215-residue chain is Cytochrome b-c1 complex subunit Rieske, mitochondrial (215 aa).

A mitochondrion-targeting transit peptide spans 1 to 22 (MLGIRSSVKTCFKPMSLTSKRL). Positions 23–30 (ISQSLLAS) are cleaved as a propeptide — removed in mature form. At 31–50 (KSTYRTPNFDDVLKENNDAD) the chain is on the mitochondrial matrix side. A helical membrane pass occupies residues 51-80 (KGRSYAYFMVGAMGLLSSAGAKSTVETFIS). Over 81-215 (SMTATADVLA…EFDGDKVIVG (135 aa)) the chain is Mitochondrial intermembrane. A hinge region spans residues 90–93 (AMAK). Residues 123–214 (PHEIQEANSV…YEFDGDKVIV (92 aa)) form the Rieske domain. [2Fe-2S] cluster is bound by residues Cys159, His161, Cys178, and His181. A disulfide bridge links Cys164 with Cys180.

It belongs to the Rieske iron-sulfur protein family. In terms of assembly, component of the ubiquinol-cytochrome c oxidoreductase (cytochrome b-c1 complex, complex III, CIII), a multisubunit enzyme composed of 10 subunits. The complex is composed of 3 respiratory subunits cytochrome b (COB), cytochrome c1 (CYT1) and Rieske protein (RIP1), 2 core protein subunits COR1 and QCR2, and 5 low-molecular weight protein subunits QCR6, QCR7, QCR8, QCR9 and QCR10. The complex exists as an obligatory dimer and forms supercomplexes (SCs) in the inner mitochondrial membrane with a monomer or a dimer of cytochrome c oxidase (complex IV, CIV), resulting in 2 different assemblies (supercomplexes III(2)IV and III(2)IV(2)). RIP1 interacts with QCR10 on the intermembrane space (IMS) side, and with QCR9. Requires [2Fe-2S] cluster as cofactor. Processed by both the mitochondrial processing peptidase (MPP) and the mitochondrial intermediate protease (MIP). Initially, MPP removes 22 amino acids from the newly imported precursor in the mitochondrial matrix. This proteolytic processing is then followed by a second proteolytic cleavage by MIP, which removes an octapeptide to generate mature-sized RIP1.

Its subcellular location is the mitochondrion inner membrane. It catalyses the reaction a quinol + 2 Fe(III)-[cytochrome c](out) = a quinone + 2 Fe(II)-[cytochrome c](out) + 2 H(+)(out). Component of the ubiquinol-cytochrome c oxidoreductase, a multisubunit transmembrane complex that is part of the mitochondrial electron transport chain which drives oxidative phosphorylation. The respiratory chain contains 3 multisubunit complexes succinate dehydrogenase (complex II, CII), ubiquinol-cytochrome c oxidoreductase (cytochrome b-c1 complex, complex III, CIII) and cytochrome c oxidase (complex IV, CIV), that cooperate to transfer electrons derived from NADH and succinate to molecular oxygen, creating an electrochemical gradient over the inner membrane that drives transmembrane transport and the ATP synthase. The cytochrome b-c1 complex catalyzes electron transfer from ubiquinol to cytochrome c, linking this redox reaction to translocation of protons across the mitochondrial inner membrane, with protons being carried across the membrane as hydrogens on the quinol. In the process called Q cycle, 2 protons are consumed from the matrix, 4 protons are released into the intermembrane space and 2 electrons are passed to cytochrome c. The Rieske protein is a catalytic core subunit containing a [2Fe-2S] iron-sulfur cluster. It cycles between 2 conformational states during catalysis to transfer electrons from the quinol bound in the Q(0) site in cytochrome b (COB) to cytochrome c1 (CYT1). In Saccharomyces cerevisiae (strain ATCC 204508 / S288c) (Baker's yeast), this protein is Cytochrome b-c1 complex subunit Rieske, mitochondrial (RIP1).